We begin with the raw amino-acid sequence, 262 residues long: 4-hydroxy-2-oxo-heptane-1,7-dioate aldolase (262 aa).

Catalysis depends on His45, which acts as the Proton acceptor. Substrate is bound at residue Gln147. Glu149 serves as a coordination point for a divalent metal cation. Substrate contacts are provided by Ala174 and Asp175. Asp175 contributes to the a divalent metal cation binding site.

It belongs to the HpcH/HpaI aldolase family. As to quaternary structure, homohexamer; trimer of dimers. The cofactor is a divalent metal cation.

The enzyme catalyses 4-hydroxy-2-oxoheptanedioate = succinate semialdehyde + pyruvate. It functions in the pathway aromatic compound metabolism; 4-hydroxyphenylacetate degradation; pyruvate and succinate semialdehyde from 4-hydroxyphenylacetate: step 7/7. Functionally, catalyzes the reversible retro-aldol cleavage of 4-hydroxy-2-ketoheptane-1,7-dioate (HKHD) to pyruvate and succinic semialdehyde. This chain is 4-hydroxy-2-oxo-heptane-1,7-dioate aldolase, found in Shigella boydii serotype 18 (strain CDC 3083-94 / BS512).